A 279-amino-acid polypeptide reads, in one-letter code: Putative pyruvate, phosphate dikinase regulatory protein (279 aa).

156–163 (GVSRTSKT) is a binding site for ADP.

This sequence belongs to the pyruvate, phosphate/water dikinase regulatory protein family. PDRP subfamily.

The catalysed reaction is N(tele)-phospho-L-histidyl/L-threonyl-[pyruvate, phosphate dikinase] + ADP = N(tele)-phospho-L-histidyl/O-phospho-L-threonyl-[pyruvate, phosphate dikinase] + AMP + H(+). The enzyme catalyses N(tele)-phospho-L-histidyl/O-phospho-L-threonyl-[pyruvate, phosphate dikinase] + phosphate + H(+) = N(tele)-phospho-L-histidyl/L-threonyl-[pyruvate, phosphate dikinase] + diphosphate. Bifunctional serine/threonine kinase and phosphorylase involved in the regulation of the pyruvate, phosphate dikinase (PPDK) by catalyzing its phosphorylation/dephosphorylation. This is Putative pyruvate, phosphate dikinase regulatory protein from Maricaulis maris (strain MCS10) (Caulobacter maris).